The chain runs to 337 residues: Transcription initiation factor IIB (337 aa).

The TFIIB-type zinc finger occupies 37–68 (YTVECPECGSRALVRDYERAELVCSECGLVID). The Zn(2+) site is built by Cys-41, Cys-44, Cys-60, and Cys-63. 2 repeat units span residues 154–237 (SELD…SREL) and 248–329 (DYIP…ELAE).

This sequence belongs to the TFIIB family.

Stabilizes TBP binding to an archaeal box-A promoter. Also responsible for recruiting RNA polymerase II to the pre-initiation complex (DNA-TBP-TFIIB). The chain is Transcription initiation factor IIB from Methanothrix thermoacetophila (strain DSM 6194 / JCM 14653 / NBRC 101360 / PT) (Methanosaeta thermophila).